A 558-amino-acid chain; its full sequence is Urocanate hydratase (558 aa).

NAD(+) contacts are provided by residues 54-55 (GG), Q132, 178-180 (GMG), E198, 244-245 (NA), 265-269 (QTSAH), 275-276 (YL), and Y324. C412 is an active-site residue. NAD(+) is bound at residue G494.

The protein belongs to the urocanase family. It depends on NAD(+) as a cofactor.

Its subcellular location is the cytoplasm. It catalyses the reaction 4-imidazolone-5-propanoate = trans-urocanate + H2O. It functions in the pathway amino-acid degradation; L-histidine degradation into L-glutamate; N-formimidoyl-L-glutamate from L-histidine: step 2/3. In terms of biological role, catalyzes the conversion of urocanate to 4-imidazolone-5-propionate. The protein is Urocanate hydratase of Acinetobacter baumannii (strain AB307-0294).